The sequence spans 226 residues: ATP synthase subunit a (226 aa).

5 consecutive transmembrane segments (helical) span residues 20 to 40, 74 to 94, 100 to 120, 162 to 182, and 187 to 207; these read LNWF…WLMP, FVSL…PYIF, LTLT…YGWI, LTAN…TGPM, and IILS…SAVA.

Belongs to the ATPase A chain family. F-type ATPases have 2 components, CF(1) - the catalytic core - and CF(0) - the membrane proton channel. CF(1) has five subunits: alpha(3), beta(3), gamma(1), delta(1), epsilon(1). CF(0) has three main subunits: a, b and c.

The protein localises to the mitochondrion inner membrane. In terms of biological role, mitochondrial membrane ATP synthase (F(1)F(0) ATP synthase or Complex V) produces ATP from ADP in the presence of a proton gradient across the membrane which is generated by electron transport complexes of the respiratory chain. F-type ATPases consist of two structural domains, F(1) - containing the extramembraneous catalytic core and F(0) - containing the membrane proton channel, linked together by a central stalk and a peripheral stalk. During catalysis, ATP synthesis in the catalytic domain of F(1) is coupled via a rotary mechanism of the central stalk subunits to proton translocation. Key component of the proton channel; it may play a direct role in the translocation of protons across the membrane. The chain is ATP synthase subunit a (mt:ATPase6) from Aedes albopictus (Asian tiger mosquito).